A 235-amino-acid polypeptide reads, in one-letter code: Phosphoribosylaminoimidazole-succinocarboxamide synthase (235 aa).

This sequence belongs to the SAICAR synthetase family.

The catalysed reaction is 5-amino-1-(5-phospho-D-ribosyl)imidazole-4-carboxylate + L-aspartate + ATP = (2S)-2-[5-amino-1-(5-phospho-beta-D-ribosyl)imidazole-4-carboxamido]succinate + ADP + phosphate + 2 H(+). It functions in the pathway purine metabolism; IMP biosynthesis via de novo pathway; 5-amino-1-(5-phospho-D-ribosyl)imidazole-4-carboxamide from 5-amino-1-(5-phospho-D-ribosyl)imidazole-4-carboxylate: step 1/2. The protein is Phosphoribosylaminoimidazole-succinocarboxamide synthase of Thermococcus kodakarensis (strain ATCC BAA-918 / JCM 12380 / KOD1) (Pyrococcus kodakaraensis (strain KOD1)).